Here is a 210-residue protein sequence, read N- to C-terminus: uncharacterized protein (210 aa).

Residues 2-91 (SRHPEVKWAQ…AEAKWWKKLV (90 aa)) enclose the CS domain. Residues 165-210 (GMGGMGGMDEFEDESDDEEEVSKPQDAEKAAEAGKSQESDAKTETS) form a disordered region. The segment covering 173-184 (DEFEDESDDEEE) has biased composition (acidic residues). Over residues 185–210 (VSKPQDAEKAAEAGKSQESDAKTETS) the composition is skewed to basic and acidic residues.

This is an uncharacterized protein from Oryza sativa subsp. indica (Rice).